The chain runs to 80 residues: Cell division activator CedA (80 aa).

The protein belongs to the CedA family.

Its function is as follows. Activates the cell division inhibited by chromosomal DNA over-replication. This is Cell division activator CedA from Salmonella arizonae (strain ATCC BAA-731 / CDC346-86 / RSK2980).